The primary structure comprises 347 residues: Gene 34 protein (347 aa).

Positions 95-126 (GKGGEAGQRAGEDDERMDEGVPEEGAPRSPHP) are disordered. The span at 106–116 (EDDERMDEGVP) shows a compositional bias: acidic residues.

It belongs to the herpesviridae UL95 family.

This is Gene 34 protein (34) from Equus caballus (Horse).